Consider the following 710-residue polypeptide: Protein Smaug homolog 1 (710 aa).

2 disordered regions span residues 276-319 and 441-476; these read ARGS…FQDE and NQAT…ESDL. A compositionally biased stretch (polar residues) spans 309-318; the sequence is QSTACNTFQD. In terms of domain architecture, SAM spans 319-379; that stretch reads EGSGMKDVPA…KIVISIQKLK (61 aa).

This sequence belongs to the SMAUG family.

The protein localises to the cytoplasm. Its subcellular location is the cell projection. It is found in the dendrite. The protein resides in the synapse. It localises to the synaptosome. Its function is as follows. Acts as a translational repressor. The chain is Protein Smaug homolog 1 (samd4a) from Xenopus laevis (African clawed frog).